Reading from the N-terminus, the 462-residue chain is Retinoic acid receptor alpha (462 aa).

Positions 1-87 are modulating; it reads MASNSSSCPT…PPPLPRIYKP (87 aa). Over residues 52 to 64 the composition is skewed to polar residues; sequence GYSTPSPATIETQ. The tract at residues 52–77 is disordered; sequence GYSTPSPATIETQSSSSEEIVPSPPS. Residue serine 77 is modified to Phosphoserine; by CDK7. 2 consecutive NR C4-type zinc fingers follow at residues 88-108 and 124-148; these read CFVC…CEGC and CHRD…LQKC. A DNA-binding region (nuclear receptor) is located at residues 88 to 153; it reads CFVCQDKSSG…RLQKCFDVGM (66 aa). Residue serine 96 is modified to Phosphoserine; by PKB/AKT1. A hinge region spans residues 154 to 182; the sequence is SKESVRNDRNKKKKEAPKPECSESYTLTP. Residues lysine 166 and lysine 171 each participate in a glycyl lysine isopeptide (Lys-Gly) (interchain with G-Cter in SUMO) cross-link. The region spanning 183–417 is the NR LBD domain; sequence EVGELIEKVR…PLIQEMLENS (235 aa). Serine 219 carries the phosphoserine; by PKA modification. Cysteine 235 is a binding site for all-trans-retinoate. The UBR5-degron motif lies at 254-258; sequence IADQI. Serine 287 provides a ligand contact to all-trans-retinoate. Lysine 347 bears the N6,N6,N6-trimethyllysine mark. The residue at position 369 (serine 369) is a Phosphoserine; by PKA and RPS6KA5. Residue lysine 399 forms a Glycyl lysine isopeptide (Lys-Gly) (interchain with G-Cter in SUMO) linkage. The segment at 404-419 is required for binding corepressor NCOR1; it reads GSMPPLIQEMLENSEG. The 9aaTAD signature appears at 408 to 416; it reads PLIQEMLEN. The interval 420 to 462 is disordered; the sequence is LDTLSGQSGGGTRDGGGLAPPPGSCSPSLSPSSHRSSPATQSP. A compositionally biased stretch (gly residues) spans 426-437; the sequence is QSGGGTRDGGGL. Over residues 444-462 the composition is skewed to low complexity; the sequence is CSPSLSPSSHRSSPATQSP.

It belongs to the nuclear hormone receptor family. NR1 subfamily. As to quaternary structure, heterodimer; with RXRA. Binds DNA preferentially as a heterodimer. RXRA serves as enhancer to induce RARA binding to RARE. Interacts with RXRG. Interacts with NCOA3 and NCOA6 coactivators, leading to a strong increase of transcription of target genes. Interacts with NCOA7; the interaction requires ligand-binding. Interacts (via the ligand-binding domain) with PRAME; interaction is direct and ligand (retinoic acid)-dependent. Interacts with PRKAR1A; the interaction negatively regulates RARA transcriptional activity. Interacts with NCOR1; the interaction occurs in the absence of ligand and represses transcriptional activity. Interacts with NCOR2. Interacts with PRMT2. Interacts with LRIF1. Interacts with ASXL1 and NCOA1. Interacts with ACTN4. Interacts with CDK7; the interaction is enhanced by interaction with GTF2H3. Interacts with GTF2H3; the interaction requires prior phosphorylation on Ser-369 which then enhances interaction with CDK7. In a complex with HDAC3, HDAC5 and HDAC7; the HDACs serve as corepressors of RARA, causing its deacetylation and inhibition of RARE DNA element binding; association with HDAC3, HDAC5 and HDAC7 is increased upon oscillatory shear stress. In the absence of hormonal ligand, interacts with TACC1. In terms of processing, phosphorylated on serine and threonine residues. Phosphorylation does not change during cell cycle. Phosphorylation on Ser-77 is crucial for the N-terminal AF1 transcriptional activity. Under stress conditions, MAPK8 enhances phosphorylation on Thr-181, Ser-445 and Ser-461 leading to RARA ubiquitination and degradation. Phosphorylation by AKT1 inhibits the transactivation activity. On retinoic acid stimulation, phosphorylation on Ser-369 by RPS6KA5 promotes interaction with GTF2H3 and the CDK7-mediated phosphorylation of Ser-77. Ubiquitinated by UBR5, leading to its degradation: UBR5 specifically recognizes and binds ligand-bound RARA when it is not associated with coactivators (NCOAs). In presence of NCOAs, the UBR5-degron is not accessible, preventing its ubiquitination and degradation. Post-translationally, sumoylated with SUMO2, mainly on Lys-399 which is also required for SENP6 binding. On all-trans retinoic acid (ATRA) binding, a conformational change may occur that allows sumoylation on two additional site, Lys-166 and Lys-171. Probably desumoylated by SENP6. Sumoylation levels determine nuclear localization and regulate ATRA-mediated transcriptional activity. In terms of processing, acetylated; acetylation is increased upon pulsatile shear stress and decreased upon oscillatory shear stress. Expressed in Sertoli cells and germ cells.

It localises to the nucleus. The protein localises to the cytoplasm. In terms of biological role, receptor for retinoic acid. Retinoic acid receptors bind as heterodimers to their target response elements in response to their ligands, all-trans or 9-cis retinoic acid, and regulate gene expression in various biological processes. The RXR/RAR heterodimers bind to the retinoic acid response elements (RARE) composed of tandem 5'-AGGTCA-3' sites known as DR1-DR5. In the absence of ligand, the RXR-RAR heterodimers associate with a multiprotein complex containing transcription corepressors that induce histone deacetylation, chromatin condensation and transcriptional suppression. On ligand binding, the corepressors dissociate from the receptors and associate with the coactivators leading to transcriptional activation. Formation of heterocomplex with histone deacetylases might lead to inhibition of RARE DNA element binding and to transcriptional repression. Transcriptional activation and RARE DNA element binding might be supported by the transcription factor KLF2. RARA plays an essential role in the regulation of retinoic acid-induced germ cell development during spermatogenesis. Has a role in the survival of early spermatocytes at the beginning prophase of meiosis. In Sertoli cells, may promote the survival and development of early meiotic prophase spermatocytes. In concert with RARG, required for skeletal growth, matrix homeostasis and growth plate function. Together with RXRA, positively regulates microRNA-10a expression, thereby inhibiting the GATA6/VCAM1 signaling response to pulsatile shear stress in vascular endothelial cells. In association with HDAC3, HDAC5 and HDAC7 corepressors, plays a role in the repression of microRNA-10a and thereby promotes the inflammatory response. This Mus musculus (Mouse) protein is Retinoic acid receptor alpha (Rara).